Consider the following 259-residue polypeptide: Ribonuclease PH (259 aa).

Phosphate contacts are provided by residues arginine 88 and glycine 126 to arginine 128.

The protein belongs to the RNase PH family. In terms of assembly, homohexameric ring arranged as a trimer of dimers.

The enzyme catalyses tRNA(n+1) + phosphate = tRNA(n) + a ribonucleoside 5'-diphosphate. Phosphorolytic 3'-5' exoribonuclease that plays an important role in tRNA 3'-end maturation. Removes nucleotide residues following the 3'-CCA terminus of tRNAs; can also add nucleotides to the ends of RNA molecules by using nucleoside diphosphates as substrates, but this may not be physiologically important. Probably plays a role in initiation of 16S rRNA degradation (leading to ribosome degradation) during starvation. This is Ribonuclease PH from Mycobacterium bovis (strain BCG / Pasteur 1173P2).